A 69-amino-acid chain; its full sequence is Pantinin-1 (69 aa).

Residues 1-23 (MKTQFVILMITVILMQMLVQTEG) form the signal peptide. Valine amide is present on Val37. Residues 41–69 (GLNDRDQLDDLFDSDLSDADIKLLKEMFK) constitute a propeptide that is removed on maturation.

Belongs to the non-disulfide-bridged peptide (NDBP) superfamily. Short antimicrobial peptide (group 4) family. As to expression, expressed by the venom gland.

It is found in the secreted. It localises to the target cell membrane. Amphipathic peptide that possesses relatively strong activities against Gram-positive bacteria and a fungus, but has very weak antimicrobial activities against Gram-negative bacteria. Also exhibits very low hemolytic activities against human erythrocytes (64 uM induce 21% of hemolysis). Minimal inhibitory concentration (MIC) are the following: 8 uM against S.aureus, 32 uM against B.magaterium, 32 uM against M.luteus, 28 uM against vancomycin-resistant Enterococci, 14 uM against methicillin-resistant S.aureus, 62 uM against E.coli, &gt;87 uM against P.putida, &gt;87 uM against K.oxytoca, 76 uM against E.cloacae, 72 uM against S.enterica and 16 uM against the fungus C.tropicalis. This Pandinus imperator (Emperor scorpion) protein is Pantinin-1.